A 270-amino-acid polypeptide reads, in one-letter code: NAD kinase (270 aa).

The active-site Proton acceptor is the Asp45. NAD(+) is bound by residues 45-46 (DG), 121-122 (NE), Arg147, Asp149, 160-165 (TAYSKS), and Ala184.

The protein belongs to the NAD kinase family. A divalent metal cation is required as a cofactor.

It is found in the cytoplasm. The catalysed reaction is NAD(+) + ATP = ADP + NADP(+) + H(+). Functionally, involved in the regulation of the intracellular balance of NAD and NADP, and is a key enzyme in the biosynthesis of NADP. Catalyzes specifically the phosphorylation on 2'-hydroxyl of the adenosine moiety of NAD to yield NADP. In Lactobacillus helveticus (strain DPC 4571), this protein is NAD kinase.